A 336-amino-acid polypeptide reads, in one-letter code: Palmitoyltransferase SWF1 (336 aa).

Over 1–2 (MS) the chain is Lumenal. The chain crosses the membrane as a helical span at residues 3–23 (WNLLFVLLIGFVVLILLSPVF). Over 24–50 (KSTWPFSTFYRNVFQPFLVDDQKYRWK) the chain is Cytoplasmic. The chain crosses the membrane as a helical span at residues 51–71 (LHLVPLFYTSIYLYLVYTYHM). Residues 72-86 (RVESTIKNELFLLER) lie on the Lumenal side of the membrane. A helical transmembrane segment spans residues 87–107 (ILIVPIIILPPVALGILAMVS). Topologically, residues 108–179 (RAEDSKDHKS…CIGKGNYLQF (72 aa)) are cytoplasmic. In terms of domain architecture, DHHC spans 134–184 (IKCSTCRIVKPARSKHCSICNRCVLVADHHCIWINNCIGKGNYLQFYLFLI). The helical transmembrane segment at 180–200 (YLFLISNIFSMCYAFLRLWYI) threads the bilayer. The Lumenal portion of the chain corresponds to 201-216 (SLNSTSTLPRAVLTLT). The chain crosses the membrane as a helical span at residues 217–237 (ILCGCFTIICAIFTYLQLAIV). At 238–336 (KEGMTTNEQD…TFLANLTDLI (99 aa)) the chain is on the cytoplasmic side.

This sequence belongs to the DHHC palmitoyltransferase family. SWF1 subfamily.

The protein localises to the endoplasmic reticulum membrane. It catalyses the reaction L-cysteinyl-[protein] + hexadecanoyl-CoA = S-hexadecanoyl-L-cysteinyl-[protein] + CoA. Functionally, palmitoyltransferase that targets several endosomal SNAREs. Palmitoylates the SNAREs SNC1, SNC2, SYN8 and TLG1, at cysteine residues close to the cytoplasmic end of their transmembrane domain. May have a role in the cellular quality control of transmembrane domain-containing proteins. The polypeptide is Palmitoyltransferase SWF1 (SWF1) (Saccharomyces cerevisiae (strain ATCC 204508 / S288c) (Baker's yeast)).